Consider the following 338-residue polypeptide: MEPVSMDKPFMYFDEIDDELEYEPESVNETPKKLPHQGQLKLLLGELFFLSKLQRHGILDGSTIVYIGSAPGTHIKYLRDHFMSMGLVIKWMLIDGRTHDPILEGLRDVILITKFVDEAYIRQLKKQLYPSRVILISDVRSKRGQKEPTTQDLLSNYSLQNIMVSVLKPAASSLKWRCPFPDQWIKDFYVPHGNEMLQPFAPSYSAEMRLLSIYSGTPIRLKCITQQDSSKYEKKMYYLNKIIRNRIIINFDYSNQEYDFFHMYHMLKTVYSNKSFTSNKSKVLHFHQSIFRFLKIPITNTEKIHHEPTQRKVPSKNTMLKSRNTKKSVRGNKQGRRT.

Tyr-22 contacts mRNA. Gln-39, Tyr-66, Gly-68, Gly-72, Asp-95, Arg-97, Val-116, and Asp-138 together coordinate S-adenosyl-L-methionine. Positions 169-249 (PAASSLKWRC…NKIIRNRIII (81 aa)) are binding to NPH-I. A binding to Rap94 region spans residues 169–333 (PAASSLKWRC…NTKKSVRGNK (165 aa)). The active-site For methyltransferase activity is the Lys-175. Residues 177–180 (RCPF), Asp-182, 205–207 (SAE), and Glu-233 each bind mRNA. The interval 305–338 (HHEPTQRKVPSKNTMLKSRNTKKSVRGNKQGRRT) is disordered. Positions 323–338 (RNTKKSVRGNKQGRRT) are enriched in basic residues.

The protein belongs to the class I-like SAM-binding methyltransferase superfamily. Poxvirus/kinetoplastid 2'-O-MTase family. Interacts with poly(A) polymerase catalytic subunit OPG063. Interacts with OPG109 and OPG123; these interactions might help linking transcription to capping and polyadenylation.

The protein resides in the virion. The enzyme catalyses a 5'-end (N(7)-methyl 5'-triphosphoguanosine)-ribonucleoside in mRNA + S-adenosyl-L-methionine = a 5'-end (N(7)-methyl 5'-triphosphoguanosine)-(2'-O-methyl-ribonucleoside) in mRNA + S-adenosyl-L-homocysteine + H(+). Functionally, displays methyltransferase, positive regulation of the poly(A) polymerase and transcription elongation activities. Involved in the modification of both mRNA ends and in intermediate and late gene positive transcription elongation. At the mRNAs 5' end, methylates the ribose 2' OH group of the first transcribed nucleotide, thereby producing a 2'-O-methylpurine cap. At the 3' end, functions as a processivity factor which stimulates the activity of the viral poly(A) polymerase OPG063 that creates mRNA's poly(A) tail. In the presence of OPG102, OPG063 does not dissociate from the RNA allowing tail elongation to around 250 adenylates. This chain is Cap-specific mRNA (nucleoside-2'-O-)-methyltransferase (OPG102), found in Oryctolagus cuniculus (Rabbit).